We begin with the raw amino-acid sequence, 409 residues long: NADH-quinone oxidoreductase subunit D (409 aa).

It belongs to the complex I 49 kDa subunit family. In terms of assembly, NDH-1 is composed of 14 different subunits. Subunits NuoB, C, D, E, F, and G constitute the peripheral sector of the complex.

Its subcellular location is the cell inner membrane. It catalyses the reaction a quinone + NADH + 5 H(+)(in) = a quinol + NAD(+) + 4 H(+)(out). NDH-1 shuttles electrons from NADH, via FMN and iron-sulfur (Fe-S) centers, to quinones in the respiratory chain. The immediate electron acceptor for the enzyme in this species is believed to be ubiquinone. Couples the redox reaction to proton translocation (for every two electrons transferred, four hydrogen ions are translocated across the cytoplasmic membrane), and thus conserves the redox energy in a proton gradient. In Campylobacter curvus (strain 525.92), this protein is NADH-quinone oxidoreductase subunit D.